A 490-amino-acid chain; its full sequence is MASFKIAIIGAGSIGFTKKLFTDILSVPELRDVEFALTDLSEHNLAMIKSILDRIVEANELPTRVTATTDRRKALEGARYIISCVRVGGLEAYADDIRIPLKYGVDQCVGDTICAGGILYGQRNIPVILDFCKDIREVAEPGAKFLNYANPMAMNTWAAIEYGKVDTVGLCHGVQHGAEQIAEILGARDGELDYICSGINHQTWFVDVRLNGRKVGKDELVAAFEAHPVFSKQEKLRIDVLKRFGVYSTESNGHLSEYLPWYRKRPDEISRWIDMSDWIHGETGGYLRYSTETRNWFETEYPRFLEEAGRPLETIRRSNEHASRILEALETGRVYRGHFNVKNNGVITNLPADAIIESPGFVDRFGINMVAGITLPEACAATCISSVNVQRMSVHAAITGDIDLLKLAVLHDPLVGAICTPEEVWQMVDEMVVAQAKWLPQYAHAIDAAKERLARATVATREWKGAARREVRSIEEIRAEKEAAKLRAAG.

4-70 (FKIAIIGAGS…LPTRVTATTD (67 aa)) lines the NAD(+) pocket. Asn150 is a substrate binding site. Cys171 serves as a coordination point for Mn(2+). His172 (proton donor) is an active-site residue. His201 is a binding site for Mn(2+). The Proton acceptor role is filled by Tyr258.

Belongs to the glycosyl hydrolase 4 family. As to quaternary structure, homodimer. Mn(2+) is required as a cofactor. The cofactor is NAD(+).

It carries out the reaction Hydrolysis of terminal, non-reducing alpha-D-galactose residues in alpha-D-galactosides, including galactose oligosaccharides, galactomannans and galactolipids.. The chain is Alpha-galactosidase (melA) from Rhizobium meliloti (strain 1021) (Ensifer meliloti).